The following is a 110-amino-acid chain: Large ribosomal subunit protein uL22 (110 aa).

The protein belongs to the universal ribosomal protein uL22 family. In terms of assembly, part of the 50S ribosomal subunit.

In terms of biological role, this protein binds specifically to 23S rRNA; its binding is stimulated by other ribosomal proteins, e.g. L4, L17, and L20. It is important during the early stages of 50S assembly. It makes multiple contacts with different domains of the 23S rRNA in the assembled 50S subunit and ribosome. Its function is as follows. The globular domain of the protein is located near the polypeptide exit tunnel on the outside of the subunit, while an extended beta-hairpin is found that lines the wall of the exit tunnel in the center of the 70S ribosome. The protein is Large ribosomal subunit protein uL22 of Idiomarina loihiensis (strain ATCC BAA-735 / DSM 15497 / L2-TR).